Here is a 1050-residue protein sequence, read N- to C-terminus: Bifunctional glutamine synthetase adenylyltransferase/adenylyl-removing enzyme (1050 aa).

Residues 1-531 (MTDPLIHTRK…LHSQLFYRPL (531 aa)) are adenylyl removase. The adenylyl transferase stretch occupies residues 537–1050 (NLSVDAMKLS…LDSVEARREL (514 aa)).

This sequence belongs to the GlnE family. Requires Mg(2+) as cofactor.

It carries out the reaction [glutamine synthetase]-O(4)-(5'-adenylyl)-L-tyrosine + phosphate = [glutamine synthetase]-L-tyrosine + ADP. It catalyses the reaction [glutamine synthetase]-L-tyrosine + ATP = [glutamine synthetase]-O(4)-(5'-adenylyl)-L-tyrosine + diphosphate. In terms of biological role, involved in the regulation of glutamine synthetase GlnA, a key enzyme in the process to assimilate ammonia. When cellular nitrogen levels are high, the C-terminal adenylyl transferase (AT) inactivates GlnA by covalent transfer of an adenylyl group from ATP to specific tyrosine residue of GlnA, thus reducing its activity. Conversely, when nitrogen levels are low, the N-terminal adenylyl removase (AR) activates GlnA by removing the adenylyl group by phosphorolysis, increasing its activity. The regulatory region of GlnE binds the signal transduction protein PII (GlnB) which indicates the nitrogen status of the cell. This is Bifunctional glutamine synthetase adenylyltransferase/adenylyl-removing enzyme from Corynebacterium efficiens (strain DSM 44549 / YS-314 / AJ 12310 / JCM 11189 / NBRC 100395).